Here is a 249-residue protein sequence, read N- to C-terminus: V-type proton ATPase subunit D 2 (249 aa).

This sequence belongs to the V-ATPase D subunit family. V-ATPase is a heteromultimeric enzyme made up of two complexes: the ATP-hydrolytic V1 complex and the proton translocation V0 complex. The V1 complex consists of three catalytic AB heterodimers that form a heterohexamer, three peripheral stalks each consisting of EG heterodimers, one central rotor including subunits D and F, and the regulatory subunits C and H. The proton translocation complex V0 consists of the proton transport subunit a, a ring of proteolipid subunits c9c'', rotary subunit d, subunits e and f, and the accessory subunits VhaAC45 and ATP6AP2.

Subunit of the V1 complex of vacuolar(H+)-ATPase (V-ATPase), a multisubunit enzyme composed of a peripheral complex (V1) that hydrolyzes ATP and a membrane integral complex (V0) that translocates protons. V-ATPase is responsible for acidifying and maintaining the pH of intracellular compartments and in some cell types, is targeted to the plasma membrane, where it is responsible for acidifying the extracellular environment. This Drosophila melanogaster (Fruit fly) protein is V-type proton ATPase subunit D 2 (Vha36-3).